Reading from the N-terminus, the 505-residue chain is Ribose import ATP-binding protein RbsA 2 (505 aa).

ABC transporter domains follow at residues 13–249 (LALE…VGRD) and 259–503 (VRAG…TGRA). Residue 45-52 (GENGAGKS) participates in ATP binding.

The protein belongs to the ABC transporter superfamily. Ribose importer (TC 3.A.1.2.1) family. As to quaternary structure, the complex is composed of an ATP-binding protein (RbsA), two transmembrane proteins (RbsC) and a solute-binding protein (RbsB).

The protein resides in the cell membrane. It carries out the reaction D-ribose(out) + ATP + H2O = D-ribose(in) + ADP + phosphate + H(+). Functionally, part of the ABC transporter complex RbsABC involved in ribose import. Responsible for energy coupling to the transport system. This Streptomyces avermitilis (strain ATCC 31267 / DSM 46492 / JCM 5070 / NBRC 14893 / NCIMB 12804 / NRRL 8165 / MA-4680) protein is Ribose import ATP-binding protein RbsA 2.